Here is a 532-residue protein sequence, read N- to C-terminus: Deoxyribodipyrimidine photo-lyase (532 aa).

The disordered stretch occupies residues 1–57; it reads MDSKKRSHSTGGEAENMESQESKAKRKPLQKHQFSKSNVVQKEEKDKTEGEEKGAEG. Positions 24 to 34 are enriched in basic residues; it reads AKRKPLQKHQF. Over residues 41-55 the composition is skewed to basic and acidic residues; it reads QKEEKDKTEGEEKGA. The 133-residue stretch at 97–229 folds into the Photolyase/cryptochrome alpha/beta domain; that stretch reads QAFVYWMSRD…QVDAHNIVPC (133 aa). Residue Arg-322 participates in DNA binding. Interaction with DNA regions lie at residues 368-376 and 442-443; these read EAVVRRELA and GF. 468–470 lines the FAD pocket; it reads YLN.

This sequence belongs to the DNA photolyase class-2 family. The cofactor is FAD.

The enzyme catalyses cyclobutadipyrimidine (in DNA) = 2 pyrimidine residues (in DNA).. In terms of biological role, involved in repair of UV radiation-induced DNA damage. Catalyzes the light-dependent monomerization (300-600 nm) of cyclobutyl pyrimidine dimers (in cis-syn configuration), which are formed between adjacent bases on the same DNA strand upon exposure to ultraviolet radiation. This is Deoxyribodipyrimidine photo-lyase (PHR) from Potorous tridactylus (Potoroo).